A 99-amino-acid polypeptide reads, in one-letter code: Protein RnfH (99 aa).

Belongs to the UPF0125 (RnfH) family.

In Tolumonas auensis (strain DSM 9187 / NBRC 110442 / TA 4), this protein is Protein RnfH.